A 542-amino-acid polypeptide reads, in one-letter code: 2,3-bisphosphoglycerate-independent phosphoglycerate mutase (542 aa).

Residues aspartate 13 and serine 63 each contribute to the Mn(2+) site. The active-site Phosphoserine intermediate is the serine 63. Residues histidine 124, arginine 154–aspartate 155, arginine 186, arginine 192, arginine 263–arginine 266, and lysine 357 each bind substrate. Residues aspartate 424, histidine 428, aspartate 465, histidine 466, and histidine 484 each coordinate Mn(2+).

The protein belongs to the BPG-independent phosphoglycerate mutase family. Monomer. Mn(2+) is required as a cofactor.

The catalysed reaction is (2R)-2-phosphoglycerate = (2R)-3-phosphoglycerate. Its pathway is carbohydrate degradation; glycolysis; pyruvate from D-glyceraldehyde 3-phosphate: step 3/5. Catalyzes the interconversion of 2-phosphoglycerate and 3-phosphoglycerate. The polypeptide is 2,3-bisphosphoglycerate-independent phosphoglycerate mutase (Herpetosiphon aurantiacus (strain ATCC 23779 / DSM 785 / 114-95)).